The following is a 377-amino-acid chain: Chaperone protein DnaJ (377 aa).

Residues 5–70 form the J domain; that stretch reads DFYEVLGVER…SKRAAYDQYG (66 aa). The CR-type zinc-finger motif lies at 136 to 214; that stretch reads GTTVTIRVPT…CHGQGRVEEQ (79 aa). Residues Cys149, Cys152, Cys166, Cys169, Cys188, Cys191, Cys202, and Cys205 each coordinate Zn(2+). CXXCXGXG motif repeat units lie at residues 149-156, 166-173, 188-195, and 202-209; these read CKTCNGSG, CTTCGGIG, CPRCHGTG, and CGSCHGQG.

It belongs to the DnaJ family. As to quaternary structure, homodimer. The cofactor is Zn(2+).

The protein localises to the cytoplasm. Its function is as follows. Participates actively in the response to hyperosmotic and heat shock by preventing the aggregation of stress-denatured proteins and by disaggregating proteins, also in an autonomous, DnaK-independent fashion. Unfolded proteins bind initially to DnaJ; upon interaction with the DnaJ-bound protein, DnaK hydrolyzes its bound ATP, resulting in the formation of a stable complex. GrpE releases ADP from DnaK; ATP binding to DnaK triggers the release of the substrate protein, thus completing the reaction cycle. Several rounds of ATP-dependent interactions between DnaJ, DnaK and GrpE are required for fully efficient folding. Also involved, together with DnaK and GrpE, in the DNA replication of plasmids through activation of initiation proteins. This is Chaperone protein DnaJ from Pseudomonas paraeruginosa (strain DSM 24068 / PA7) (Pseudomonas aeruginosa (strain PA7)).